A 530-amino-acid chain; its full sequence is UPF0422 protein lpg2959 (530 aa).

An N-terminal signal peptide occupies residues 1–19; sequence MKFKKIILALACLSSPLYA. The stretch at 20–66 forms a coiled coil; the sequence is DQDQQLKSEIQRLQHQAEDLQAQLNRLQKQLANHKSSQQKHEQQAAA. The segment at 50-81 is disordered; the sequence is LANHKSSQQKHEQQAAAKPAEPQSKPTVKSGA. Positions 63 to 75 are enriched in low complexity; sequence QAAAKPAEPQSKP.

Belongs to the UPF0422 family.

This chain is UPF0422 protein lpg2959, found in Legionella pneumophila subsp. pneumophila (strain Philadelphia 1 / ATCC 33152 / DSM 7513).